The primary structure comprises 498 residues: MNSKKTGVIILGCIAFLHIACSGDKKTQAQDTSDSMLEKSSAISEKPNIIFYLADDQDVYDYGCYGNEKVHTPAVDALAKDGILFTNAFTAQAICAPSRSQLFTGKYPLKNGCFANHTGTRSDIKSVTTHMKKLGYEVVLAGKSHVKPENVYQWDREWEPVPKQGVPRDYIPLDSIAAYLKNAKKPFCMFITSKYPHGKYFDVEHPKASDIKFYPFNENKKTDKTFIKTKAGYYRSIEEDNTQLEEVLKLVDTYLTDNTLFIYSADHGVSGKFTVKDIGLKVPFVARWPKVIKPGSTSNQLIHYTDVLPTFMEIAGGKFPEDMDGNSFLPLLQGKDVEVNNYVYGVRTNQNILNSEIFPSRMIRDKRYKYIRNFNSIEVVEQNLTGKPNVNYFIERGAKAHKNEPFEELYDLQNDPFEQHNLASNPDYKSIKEKLIKDMFSWMKAQGDILSENMIGIPIITPKGNRGFKLDQDTPRRKIPEARKNTLTKDDYIVIEHW.

The signal sequence occupies residues 1–22 (MNSKKTGVIILGCIAFLHIACS). The Ca(2+) site is built by Asp-55, Asp-56, Cys-95, Asp-266, and His-267. The Nucleophile role is filled by Cys-95. A 3-oxoalanine (Cys) modification is found at Cys-95.

It belongs to the sulfatase family. Requires Ca(2+) as cofactor. The conversion to 3-oxoalanine (also known as C-formylglycine, FGly), of a serine or cysteine residue in prokaryotes and of a cysteine residue in eukaryotes, is critical for catalytic activity. This post-translational modification is severely defective in multiple sulfatase deficiency (MSD).

The protein localises to the periplasm. Functionally, sulfatase involved in ulvan degradation. Ulvan is the main polysaccharide component of the Ulvales (green seaweed) cell wall. It is composed of disaccharide building blocks comprising 3-sulfated rhamnose (Rha3S) linked to D-glucuronic acid (GlcA), L-iduronic acid (IduA), or D-xylose (Xyl). The polypeptide is Ulvan-active sulfatase (Formosa agariphila (strain DSM 15362 / KCTC 12365 / LMG 23005 / KMM 3901 / M-2Alg 35-1)).